The chain runs to 82 residues: RNA-binding protein TTE2299 (82 aa).

This sequence belongs to the eukaryotic ribosomal protein eL8 family.

In Caldanaerobacter subterraneus subsp. tengcongensis (strain DSM 15242 / JCM 11007 / NBRC 100824 / MB4) (Thermoanaerobacter tengcongensis), this protein is RNA-binding protein TTE2299.